Reading from the N-terminus, the 299-residue chain is Homoserine kinase (299 aa).

Proline 84–alanine 94 is a binding site for ATP.

Belongs to the GHMP kinase family. Homoserine kinase subfamily.

The protein resides in the cytoplasm. The catalysed reaction is L-homoserine + ATP = O-phospho-L-homoserine + ADP + H(+). The protein operates within amino-acid biosynthesis; L-threonine biosynthesis; L-threonine from L-aspartate: step 4/5. Catalyzes the ATP-dependent phosphorylation of L-homoserine to L-homoserine phosphate. The protein is Homoserine kinase of Helicobacter hepaticus (strain ATCC 51449 / 3B1).